Here is a 962-residue protein sequence, read N- to C-terminus: UvrABC system protein A (962 aa).

Position 38 to 45 (38 to 45 (GISGSGKS)) interacts with ATP. ABC transporter domains lie at 319–597 (WSKS…PDSL) and 617–944 (PSGR…RFLR). 649-656 (GVSGSGKS) provides a ligand contact to ATP. Residues 748–774 (CEACGGDGIIKIEMHFLADVYVPCEVC) form a C4-type zinc finger.

It belongs to the ABC transporter superfamily. UvrA family. In terms of assembly, forms a heterotetramer with UvrB during the search for lesions.

The protein localises to the cytoplasm. Its function is as follows. The UvrABC repair system catalyzes the recognition and processing of DNA lesions. UvrA is an ATPase and a DNA-binding protein. A damage recognition complex composed of 2 UvrA and 2 UvrB subunits scans DNA for abnormalities. When the presence of a lesion has been verified by UvrB, the UvrA molecules dissociate. The sequence is that of UvrABC system protein A from Methanothermobacter thermautotrophicus (strain ATCC 29096 / DSM 1053 / JCM 10044 / NBRC 100330 / Delta H) (Methanobacterium thermoautotrophicum).